The chain runs to 145 residues: Protein BUD31 homolog 1 (145 aa).

The protein belongs to the BUD31 (G10) family.

Its subcellular location is the nucleus. The chain is Protein BUD31 homolog 1 from Oryza sativa subsp. japonica (Rice).